The chain runs to 88 residues: Small ribosomal subunit protein uS17 (88 aa).

This sequence belongs to the universal ribosomal protein uS17 family. As to quaternary structure, part of the 30S ribosomal subunit.

Its function is as follows. One of the primary rRNA binding proteins, it binds specifically to the 5'-end of 16S ribosomal RNA. The polypeptide is Small ribosomal subunit protein uS17 (Pseudomonas fluorescens (strain SBW25)).